The sequence spans 126 residues: Scygonadin (126 aa).

The signal sequence occupies residues 1–24 (MRSSLLLGLTVVVLLGVIVPPCMA).

In terms of tissue distribution, expressed in the ejaculatory ducts of mature males. Not detected in the ejaculatory ducts of immature males. Not detected in hepatopancreas, female reproductive tract, eyes, exoskeleton, subcuticular epithelia, heart, gills, stomach, muscle and hemocytes.

It is found in the secreted. Its function is as follows. Has antibacterial activity against the Gram-positive bacterium M.luteus with an IC(90) of 125ug/ml. Has weak antibacterial activity against the Gram-negative bacterium A.hydrophila. This Scylla serrata (Mud crab) protein is Scygonadin.